A 473-amino-acid polypeptide reads, in one-letter code: MSEESDMDKAIKETSILEEYSINWTQKLGAGISGPVRVCVKKSTQERFALKILLDRPKARNEVRLHMMCATHPNIVQIIEVFANSVQFPHESSPRARLLIVMEMMEGGELFHRISQHRHFTEKQASQVTKQIALALRHCHLLNIAHRDLKPENLLFKDNSLDAPVKLCDFGFAKIDQGDLMTPQFTPYYVAPQVLEAQRRHQKEKSGIIPTSPTPYTYNKSCDLWSLGVIIYVMLCGYPPFYSKHHSRTIPKDMRRKIMTGSFEFPEEEWSQISEMAKDVVRKLLKVKPEERLTIEGVLDHPWLNSTEALDNVLPSAQLMMDKAVVAGIQQAHAEQLANMRIQDLKVSLKPLHSVNNPILRKRKLLGTKPKDSVYIHDHENGAEDSNVALEKLRDVIAQCILPQAGKGENEDEKLNEVMQEAWKYNRECKLLRDTLQSFSWNGRGFTDKVDRLKLAEIVKQVIEEQTTSHESQ.

Residues 22–304 (INWTQKLGAG…IEGVLDHPWL (283 aa)) form the Protein kinase domain. ATP contacts are provided by residues 28–36 (LGAGISGPV) and Lys-51. Position 115 is a phosphoserine; by PKA (Ser-115). Residue Asp-148 is the Proton acceptor of the active site. Residue Thr-182 is modified to Phosphothreonine; by MAPK11, MAPK14, MAPK4, MAPK6 and PKA. Phosphoserine is present on residues Ser-212 and Ser-354. Residues 409–440 (ENEDEKLNEVMQEAWKYNRECKLLRDTLQSFS) adopt a coiled-coil conformation.

This sequence belongs to the protein kinase superfamily. CAMK Ser/Thr protein kinase family. In terms of assembly, interacts with ERK3/MAPK6 and ERK4/MAPK4 (via FRIEDE motif); the interaction is direct. Interacts with YWHAE; the interaction prevents phosphorylation of HSP27/HSPB1 leading to disrupt F-actin polymerization. Interacts with SQSTM1. Phosphorylated on Thr-182 ERK3/MAPK6 or ERK4/MAPK4; which is the regulatory phosphorylation site and is located on the T-loop/loop 12, leading to activation. Phosphorylation at Thr-182 by p38-alpha/MAPK14, p38-beta/MAPK11 is subject to debate. Phosphorylated at Ser-115 by PKA/PRKACA, leading to localization to the cytoplasm. Autophosphorylated. As to expression, expressed ubiquitously.

The protein localises to the cytoplasm. Its subcellular location is the nucleus. The catalysed reaction is L-seryl-[protein] + ATP = O-phospho-L-seryl-[protein] + ADP + H(+). It carries out the reaction L-threonyl-[protein] + ATP = O-phospho-L-threonyl-[protein] + ADP + H(+). Its activity is regulated as follows. Activated following phosphorylation at Thr-182 by p38-alpha/MAPK14, p38-beta/MAPK11, ERK2/MAPK1, ERK3/MAPK6, and ERK4/MAPK4. Activated by stress-related extracellular stimuli; such as H(2)O(2), arsenite, anisomycin TNF alpha and also PMA and the calcium ionophore A23187; but to a lesser extent. In vitro, activated by SQSTM1. Inhibited by diterpenoid alkaloid noroxoaconitine. Tumor suppressor serine/threonine-protein kinase involved in mTORC1 signaling and post-transcriptional regulation. Phosphorylates FOXO3, ERK3/MAPK6, ERK4/MAPK4, HSP27/HSPB1, p53/TP53 and RHEB. Acts as a tumor suppressor by mediating Ras-induced senescence and phosphorylating p53/TP53. Involved in post-transcriptional regulation of MYC by mediating phosphorylation of FOXO3: phosphorylation of FOXO3 leads to promote nuclear localization of FOXO3, enabling expression of miR-34b and miR-34c, 2 post-transcriptional regulators of MYC that bind to the 3'UTR of MYC transcript and prevent MYC translation. Acts as a negative regulator of mTORC1 signaling by mediating phosphorylation and inhibition of RHEB. Part of the atypical MAPK signaling via its interaction with ERK3/MAPK6 or ERK4/MAPK4: the precise role of the complex formed with ERK3/MAPK6 or ERK4/MAPK4 is still unclear, but the complex follows a complex set of phosphorylation events: upon interaction with atypical MAPK (ERK3/MAPK6 or ERK4/MAPK4), ERK3/MAPK6 (or ERK4/MAPK4) is phosphorylated and then mediates phosphorylation and activation of MAPKAPK5, which in turn phosphorylates ERK3/MAPK6 (or ERK4/MAPK4). Mediates phosphorylation of HSP27/HSPB1 in response to PKA/PRKACA stimulation, inducing F-actin rearrangement. This Homo sapiens (Human) protein is MAP kinase-activated protein kinase 5 (MAPKAPK5).